We begin with the raw amino-acid sequence, 198 residues long: Cytochrome c oxidase subunit 2 (198 aa).

Residues 1-13 traverse the membrane as a helical segment; it reads AICSLVLYLLTLM. The Mitochondrial matrix portion of the chain corresponds to 14 to 26; the sequence is LMEKLSSNTVDAQ. A helical membrane pass occupies residues 27 to 54; it reads EVELIWTILPAIVLILLALPSLQILYMM. Topologically, residues 55-198 are mitochondrial intermembrane; the sequence is DEIDEPDLTL…WSSLLSTSSL (144 aa). Positions 128, 163, 165, 167, 171, and 174 each coordinate Cu cation. Glu165 provides a ligand contact to Mg(2+).

The protein belongs to the cytochrome c oxidase subunit 2 family. Component of the cytochrome c oxidase (complex IV, CIV), a multisubunit enzyme composed of 14 subunits. The complex is composed of a catalytic core of 3 subunits MT-CO1, MT-CO2 and MT-CO3, encoded in the mitochondrial DNA, and 11 supernumerary subunits COX4I, COX5A, COX5B, COX6A, COX6B, COX6C, COX7A, COX7B, COX7C, COX8 and NDUFA4, which are encoded in the nuclear genome. The complex exists as a monomer or a dimer and forms supercomplexes (SCs) in the inner mitochondrial membrane with NADH-ubiquinone oxidoreductase (complex I, CI) and ubiquinol-cytochrome c oxidoreductase (cytochrome b-c1 complex, complex III, CIII), resulting in different assemblies (supercomplex SCI(1)III(2)IV(1) and megacomplex MCI(2)III(2)IV(2)). Found in a complex with TMEM177, COA6, COX18, COX20, SCO1 and SCO2. Interacts with TMEM177 in a COX20-dependent manner. Interacts with COX20. Interacts with COX16. Cu cation is required as a cofactor.

It localises to the mitochondrion inner membrane. The catalysed reaction is 4 Fe(II)-[cytochrome c] + O2 + 8 H(+)(in) = 4 Fe(III)-[cytochrome c] + 2 H2O + 4 H(+)(out). Functionally, component of the cytochrome c oxidase, the last enzyme in the mitochondrial electron transport chain which drives oxidative phosphorylation. The respiratory chain contains 3 multisubunit complexes succinate dehydrogenase (complex II, CII), ubiquinol-cytochrome c oxidoreductase (cytochrome b-c1 complex, complex III, CIII) and cytochrome c oxidase (complex IV, CIV), that cooperate to transfer electrons derived from NADH and succinate to molecular oxygen, creating an electrochemical gradient over the inner membrane that drives transmembrane transport and the ATP synthase. Cytochrome c oxidase is the component of the respiratory chain that catalyzes the reduction of oxygen to water. Electrons originating from reduced cytochrome c in the intermembrane space (IMS) are transferred via the dinuclear copper A center (CU(A)) of subunit 2 and heme A of subunit 1 to the active site in subunit 1, a binuclear center (BNC) formed by heme A3 and copper B (CU(B)). The BNC reduces molecular oxygen to 2 water molecules using 4 electrons from cytochrome c in the IMS and 4 protons from the mitochondrial matrix. The sequence is that of Cytochrome c oxidase subunit 2 (MT-CO2) from Tinamus major (Great tinamou).